A 981-amino-acid chain; its full sequence is Echinoderm microtubule-associated protein-like 4 (981 aa).

Residue Met1 is modified to N-acetylmethionine. Disordered stretches follow at residues 1 to 20 (MDGF…TSDV) and 57 to 205 (DHVA…PKLI). The microtubule-binding stretch occupies residues 1 to 249 (MDGFAGSLDD…IPSDVDNYDD (249 aa)). Ser7, Ser13, Ser16, and Ser61 each carry phosphoserine. Residues 14–63 (AASTSDVQDRLSALESRVQQQEDEITVLKAALADVLRRLAISEDHVASVK) are a coiled coil. Position 96 is a phosphothreonine (Thr96). Basic and acidic residues predominate over residues 114–134 (GTEKKKEKPQGQREKKEESHS). The residue at position 134 (Ser134) is a Phosphoserine; by NEK7. Residues 137–155 (QSPQIRASPSPQPSSQPLQ) are compositionally biased toward low complexity. Ser144 carries the post-translational modification Phosphoserine; by NEK6. Ser146 bears the Phosphoserine; by NEK7 mark. Residue Ser171 is modified to Phosphoserine. Over residues 176 to 193 (SPAEKSHNSWENSDDSRN) the composition is skewed to basic and acidic residues. Position 200 is a phosphoserine (Ser200). Thr201 is modified (phosphothreonine). Tyr226 carries the phosphotyrosine modification. Thr237 bears the Phosphothreonine mark. WD repeat units follow at residues 259-297 (LKLE…LFNY), 301-348 (TQRH…VWDS), 356-396 (IIGL…VWDW), 403-438 (AEIK…FWTW), and 445-484 (RKQG…IWSK). At Thr490 the chain carries Phosphothreonine; by NEK6. WD repeat units follow at residues 500-538 (QISK…LWDH), 543-579 (EREI…LRGT), 582-621 (DGFQ…LWNS), 625-662 (RLEW…VLDA), 668-704 (VSIH…LYVV), 711-750 (YSRY…YWDI), 760-818 (RSDC…LFQY), and 825-864 (APSH…QWKL). The residue at position 609 (Thr609) is a Phosphothreonine; by NEK6 and NEK7. Polar residues predominate over residues 881-893 (LTKAPVSSTESVI). The interval 881-981 (LTKAPVSSTE…EDQQDPSPSS (101 aa)) is disordered. 2 positions are modified to phosphoserine: Ser891 and Ser895. A phosphothreonine mark is found at Thr897 and Thr899. Position 903 is a phosphoserine (Ser903). The span at 916–931 (ISSSPTLLENSLEQTV) shows a compositional bias: polar residues. Residues 937 to 946 (HSEEESEEGS) show a composition bias toward acidic residues. Ser978 bears the Phosphoserine mark. Ser981 is subject to Phosphoserine; by NEK6 and NEK7.

Belongs to the WD repeat EMAP family. As to quaternary structure, homotrimer; self-association is mediated by the N-terminal coiled coil. Interacts (via WD repeats) with NUDC. Interacts with alpha- and beta-tubulin during mitosis. Post-translationally, phosphorylated during mitosis. Phosphorylation at Ser-144 and Ser-146 promotes its dissociation from microtubules during mitosis which is required for efficient chromosome congression.

It localises to the cytoplasm. The protein localises to the cytoskeleton. Its subcellular location is the spindle. The protein resides in the microtubule organizing center. It is found in the midbody. Its function is as follows. Essential for the formation and stability of microtubules (MTs). Required for the organization of the mitotic spindle and for the proper attachment of kinetochores to MTs. Promotes the recruitment of NUDC to the mitotic spindle for mitotic progression. This chain is Echinoderm microtubule-associated protein-like 4 (EML4), found in Homo sapiens (Human).